Here is a 302-residue protein sequence, read N- to C-terminus: MRIVLITGISGSGKSVALNALEDAGYYCVDNLPPHVLPELARYLAQDGQRRLAVAIDARSSASLDEMPGLIRELSREHDVRVLFLNASTQALIQRFSETRRRHPLSGSLSHDADVGLLSSLEEAIERERELVAPLAEFGHQIDTSTLRANALRTWVKRFIEQKNNDLMVMFESFGFKRGVPLDADLMFDVRALPNPYYDHQLRPLTGLDQPVIAFLDALPIVHQMIDDIHAFLMKWLPHFRDDNRSYLTVAIGCTGGQHRSVFIAETLAARLAREANVIVRHRDAPVDVDASSRLVSEVDRP.

Residue G8–S15 coordinates ATP. D57–S60 contributes to the GTP binding site.

Belongs to the RapZ-like family.

In terms of biological role, displays ATPase and GTPase activities. The chain is Nucleotide-binding protein BceJ2315_08000 from Burkholderia cenocepacia (strain ATCC BAA-245 / DSM 16553 / LMG 16656 / NCTC 13227 / J2315 / CF5610) (Burkholderia cepacia (strain J2315)).